Reading from the N-terminus, the 179-residue chain is Large ribosomal subunit protein uL5 (179 aa).

It belongs to the universal ribosomal protein uL5 family. As to quaternary structure, part of the 50S ribosomal subunit; part of the 5S rRNA/L5/L18/L25 subcomplex. Contacts the 5S rRNA and the P site tRNA. Forms a bridge to the 30S subunit in the 70S ribosome.

This is one of the proteins that bind and probably mediate the attachment of the 5S RNA into the large ribosomal subunit, where it forms part of the central protuberance. In the 70S ribosome it contacts protein S13 of the 30S subunit (bridge B1b), connecting the 2 subunits; this bridge is implicated in subunit movement. Contacts the P site tRNA; the 5S rRNA and some of its associated proteins might help stabilize positioning of ribosome-bound tRNAs. The protein is Large ribosomal subunit protein uL5 of Dichelobacter nodosus (strain VCS1703A).